Reading from the N-terminus, the 401-residue chain is MSDTKGAAEQGLQIDGDLINSNWNEVVDNFDDMKLKGELLRGIYAYGFERPSAIQQRAIMPIVTGRDCIAQAQSGTGKTATFSVSILQRIDTTVKKTQALVLAPTRELAQQIQKVVIALGDYLNVDCHACVGGTAVREDIARLNEGPHIVVGTPGRVFDMINRGALKTEAVMMFCLDEADEMLSTGFKESIYEIFQLLPGETQVVLLSATMAPEVLDVTKKFMRDPIRILVKKDELTLEGIRQFYINVEKEEWKLETLCDLYETVTITQAVIFCSTRRKVDWLTQQLHDRQFTVSAMHGDMKQEEREVIMKEFRSGSSRVLITTDLLARGIDVQQVSLVINYDLPSSKENYIHRIGRGGRFGRKGVAINFVSNEDKNMLEEIETYYNTQVEEMPLNVADLI.

Residues 28-56 carry the Q motif motif; that stretch reads DNFDDMKLKGELLRGIYAYGFERPSAIQQ. The 171-residue stretch at 59–229 folds into the Helicase ATP-binding domain; it reads IMPIVTGRDC…KKFMRDPIRI (171 aa). 72–79 serves as a coordination point for ATP; that stretch reads AQSGTGKT. Residues 177-180 carry the DEAD box motif; it reads DEAD. The region spanning 240–401 is the Helicase C-terminal domain; it reads GIRQFYINVE…EMPLNVADLI (162 aa).

Belongs to the DEAD box helicase family. eIF4A subfamily. As to quaternary structure, component of the eIF4F complex, which composition varies with external and internal environmental conditions. It is composed of at least eIF4A, eIF4E and eIF4G.

The protein localises to the cytoplasm. The catalysed reaction is ATP + H2O = ADP + phosphate + H(+). In terms of biological role, ATP-dependent RNA helicase which is a subunit of the eIF4F complex involved in cap recognition and is required for mRNA binding to ribosome. In the current model of translation initiation, eIF4A unwinds RNA secondary structures in the 5'-UTR of mRNAs which is necessary to allow efficient binding of the small ribosomal subunit, and subsequent scanning for the initiator codon. The sequence is that of ATP-dependent RNA helicase eIF4A (TIF1) from Cryptococcus neoformans var. neoformans serotype D (strain B-3501A) (Filobasidiella neoformans).